Reading from the N-terminus, the 227-residue chain is Transmembrane emp24 domain-containing protein 1 (227 aa).

The signal sequence occupies residues 1–24 (MMAAGAAVALALWLLLPAVGVGEA). The Extracellular portion of the chain corresponds to 25–194 (GPPPIQDGEF…LQEDNLERVN (170 aa)). A GOLD domain is found at 43–125 (KQCFYQSAPA…EKLVFFELIF (83 aa)). Residues 145–170 (EMLDVKMEDIKESIETMRTRLERSIQ) adopt a coiled-coil conformation. Residues 195 to 215 (FWSAANVAVLLLVAVLQVCTL) traverse the membrane as a helical segment. At 216–227 (KRFFHDKRPVPT) the chain is on the cytoplasmic side. Positions 218–219 (FF) match the COPII vesicle coat-binding motif. A COPI vesicle coat-binding motif is present at residues 218–227 (FFHDKRPVPT).

It belongs to the EMP24/GP25L family. In terms of assembly, homodimer in endoplasmic reticulum, endoplasmic reticulum-Golgi intermediate compartment and cis-Golgi network. Interacts with IL1RL1. Interacts with RNF26; this interaction is important to modulate innate immune signaling through the cGAS-STING pathway. Widely expressed.

The protein localises to the cell membrane. It is found in the endoplasmic reticulum membrane. It localises to the golgi apparatus. Its subcellular location is the cis-Golgi network membrane. The protein resides in the endoplasmic reticulum-Golgi intermediate compartment membrane. Functionally, potential role in vesicular protein trafficking, mainly in the early secretory pathway. May act as a cargo receptor at the lumenal side for incorporation of secretory cargo molecules into transport vesicles and may be involved in vesicle coat formation at the cytoplasmic side. Plays a positive role in IL-33-mediated IL-8 and IL-6 production by interacting with interleukin-33 receptor IL1RL1. Plays also a role in the modulation of innate immune signaling through the cGAS-STING pathway by interacting with RNF26. The polypeptide is Transmembrane emp24 domain-containing protein 1 (Tmed1) (Mus musculus (Mouse)).